The sequence spans 279 residues: Aspartate/glutamate leucyltransferase (279 aa).

Positions 245–279 (ARERGARPPRGPGALKDACDLPLSDAQPADIEDLD) are disordered.

The protein belongs to the R-transferase family. Bpt subfamily.

Its subcellular location is the cytoplasm. The enzyme catalyses N-terminal L-glutamyl-[protein] + L-leucyl-tRNA(Leu) = N-terminal L-leucyl-L-glutamyl-[protein] + tRNA(Leu) + H(+). The catalysed reaction is N-terminal L-aspartyl-[protein] + L-leucyl-tRNA(Leu) = N-terminal L-leucyl-L-aspartyl-[protein] + tRNA(Leu) + H(+). Functions in the N-end rule pathway of protein degradation where it conjugates Leu from its aminoacyl-tRNA to the N-termini of proteins containing an N-terminal aspartate or glutamate. The polypeptide is Aspartate/glutamate leucyltransferase (Caulobacter vibrioides (strain ATCC 19089 / CIP 103742 / CB 15) (Caulobacter crescentus)).